Here is a 64-residue protein sequence, read N- to C-terminus: Temporin-ALf (64 aa).

A signal peptide spans 1–22 (MFTLKKSLLLLFFLGTINLSLC). The propeptide occupies 23–46 (EQERNAEEERRDEPDERNAEVEKR). L62 is modified (leucine amide).

As to expression, expressed by the skin glands.

It localises to the secreted. Antimicrobial peptide with activity against Gram-positive and Gram-negative bacteria and against fungi. Has been tested against S.aureus (MIC=2.5 ug/mL), B.pumilus (MIC=5.0 ug/mL), B.cereus (MIC=30.0 ug/mL), E.coli (MIC=2.5 ug/mL), B.dysenteriae (MIC=5.0 ug/mL), A.cacoaceticus (MIC=30.0 ug/mL), P.aeruginosa (MIC=5.0 ug/mL) and C.albicans (MIC=2.5 ug/mL). Also shows a weak hemolytic activity. This is Temporin-ALf from Amolops loloensis (Lolokou Sucker Frog).